A 190-amino-acid polypeptide reads, in one-letter code: Acireductone dioxygenase (190 aa).

Residues His-101, His-103, Glu-107, and His-145 each contribute to the Fe(2+) site. Ni(2+) is bound by residues His-101, His-103, Glu-107, and His-145.

The protein belongs to the acireductone dioxygenase (ARD) family. As to quaternary structure, monomer. Requires Fe(2+) as cofactor. Ni(2+) is required as a cofactor.

The enzyme catalyses 1,2-dihydroxy-5-(methylsulfanyl)pent-1-en-3-one + O2 = 3-(methylsulfanyl)propanoate + CO + formate + 2 H(+). It catalyses the reaction 1,2-dihydroxy-5-(methylsulfanyl)pent-1-en-3-one + O2 = 4-methylsulfanyl-2-oxobutanoate + formate + 2 H(+). It functions in the pathway amino-acid biosynthesis; L-methionine biosynthesis via salvage pathway; L-methionine from S-methyl-5-thio-alpha-D-ribose 1-phosphate: step 5/6. Functionally, catalyzes 2 different reactions between oxygen and the acireductone 1,2-dihydroxy-3-keto-5-methylthiopentene (DHK-MTPene) depending upon the metal bound in the active site. Fe-containing acireductone dioxygenase (Fe-ARD) produces formate and 2-keto-4-methylthiobutyrate (KMTB), the alpha-ketoacid precursor of methionine in the methionine recycle pathway. Ni-containing acireductone dioxygenase (Ni-ARD) produces methylthiopropionate, carbon monoxide and formate, and does not lie on the methionine recycle pathway. The protein is Acireductone dioxygenase of Saccharopolyspora erythraea (strain ATCC 11635 / DSM 40517 / JCM 4748 / NBRC 13426 / NCIMB 8594 / NRRL 2338).